Reading from the N-terminus, the 426-residue chain is tRNA(Ile)-lysidine synthase (426 aa).

An ATP-binding site is contributed by 27-32 (SGGADS).

Belongs to the tRNA(Ile)-lysidine synthase family.

It localises to the cytoplasm. The catalysed reaction is cytidine(34) in tRNA(Ile2) + L-lysine + ATP = lysidine(34) in tRNA(Ile2) + AMP + diphosphate + H(+). Ligates lysine onto the cytidine present at position 34 of the AUA codon-specific tRNA(Ile) that contains the anticodon CAU, in an ATP-dependent manner. Cytidine is converted to lysidine, thus changing the amino acid specificity of the tRNA from methionine to isoleucine. The polypeptide is tRNA(Ile)-lysidine synthase (Bacteroides thetaiotaomicron (strain ATCC 29148 / DSM 2079 / JCM 5827 / CCUG 10774 / NCTC 10582 / VPI-5482 / E50)).